A 336-amino-acid polypeptide reads, in one-letter code: Probable long-chain-alcohol O-fatty-acyltransferase 8 (336 aa).

Transmembrane regions (helical) follow at residues 7 to 27 (SFVK…YIPS), 38 to 58 (SVLP…FTIF), 59 to 79 (SSTT…LFAF), 82 to 102 (GPLL…CLPI), 117 to 135 (WVFF…VHNY), 152 to 172 (LYLV…IILG), 228 to 248 (MGCW…YFYI), and 284 to 304 (PMLS…FLFF).

This sequence belongs to the wax synthase family.

Its subcellular location is the membrane. The enzyme catalyses a long chain fatty alcohol + a fatty acyl-CoA = a wax ester + CoA. Catalyzes the final step in the synthesis of long-chain linear esters (waxes). The protein is Probable long-chain-alcohol O-fatty-acyltransferase 8 of Arabidopsis thaliana (Mouse-ear cress).